A 333-amino-acid polypeptide reads, in one-letter code: Phosphate acyltransferase (333 aa).

This sequence belongs to the PlsX family. As to quaternary structure, homodimer. Probably interacts with PlsY.

The protein resides in the cytoplasm. It carries out the reaction a fatty acyl-[ACP] + phosphate = an acyl phosphate + holo-[ACP]. It participates in lipid metabolism; phospholipid metabolism. Catalyzes the reversible formation of acyl-phosphate (acyl-PO(4)) from acyl-[acyl-carrier-protein] (acyl-ACP). This enzyme utilizes acyl-ACP as fatty acyl donor, but not acyl-CoA. This Lactobacillus acidophilus (strain ATCC 700396 / NCK56 / N2 / NCFM) protein is Phosphate acyltransferase.